Reading from the N-terminus, the 192-residue chain is 7-methyl-GTP pyrophosphatase (192 aa).

Asp69 (proton acceptor) is an active-site residue.

This sequence belongs to the Maf family. YceF subfamily. A divalent metal cation is required as a cofactor.

The protein resides in the cytoplasm. The catalysed reaction is N(7)-methyl-GTP + H2O = N(7)-methyl-GMP + diphosphate + H(+). Its function is as follows. Nucleoside triphosphate pyrophosphatase that hydrolyzes 7-methyl-GTP (m(7)GTP). May have a dual role in cell division arrest and in preventing the incorporation of modified nucleotides into cellular nucleic acids. The chain is 7-methyl-GTP pyrophosphatase from Methylobacillus flagellatus (strain ATCC 51484 / DSM 6875 / VKM B-1610 / KT).